Here is a 443-residue protein sequence, read N- to C-terminus: D(2) dopamine receptor (443 aa).

At 1 to 37 (MDPLNLSWYDDDLERQNWSRPFNGSDGKADRPHYNYY) the chain is on the extracellular side. N-linked (GlcNAc...) asparagine glycans are attached at residues Asn-5, Asn-17, and Asn-23. A helical transmembrane segment spans residues 38–60 (ATLLTLLIAVIVFGNVLVCMAVS). The Cytoplasmic segment spans residues 61–70 (REKALQTTTN). Residues 71–93 (YLIVSLAVADLLVATLVMPWVVY) form a helical membrane-spanning segment. Topologically, residues 94-108 (LEVVGEWKFSKIHCD) are extracellular. An intrachain disulfide couples Cys-107 to Cys-182. The chain crosses the membrane as a helical span at residues 109–130 (IFVTLDVMMCTASILNLCAISI). The Cytoplasmic portion of the chain corresponds to 131 to 151 (DRYTAVAMPMLYNTRYSSKRR). A helical membrane pass occupies residues 152 to 172 (VTVMIAIVWVLSFTISCPLLF). The Extracellular segment spans residues 173–188 (GLNNADQNECIIANPA). Residues 189-213 (FVVYSSIVSFYVPFIVTLLVYIKIY) form a helical membrane-spanning segment. The interval 211–373 (KIYIVLRRRR…SQQKEKKATQ (163 aa)) is interaction with PPP1R9B. Residues 214–373 (IVLRRRRKRV…SQQKEKKATQ (160 aa)) are Cytoplasmic-facing. A disordered region spans residues 281–332 (MEMLSSTSPPERTRYSPIPPSHHQLTLPDPSHHGLHSTPDSPAKPEKNGHAK). The chain crosses the membrane as a helical span at residues 374–395 (MLAIVLGVFIICWLPFFITHIL). The Extracellular segment spans residues 396 to 409 (NIHCDCNIPPVLYS). Residues Cys-399 and Cys-401 are joined by a disulfide bond. A helical transmembrane segment spans residues 410–431 (AFTWLGYVNSAVNPIIYTTFNI). The Cytoplasmic segment spans residues 432–443 (EFRKAFLKILHC). Residue Cys-443 is the site of S-palmitoyl cysteine attachment.

The protein belongs to the G-protein coupled receptor 1 family. In terms of assembly, forms homo- and heterooligomers with DRD4. The interaction with DRD4 may modulate agonist-induced downstream signaling. Interacts with CADPS and CADPS2. Interacts with GPRASP1, PPP1R9B and CLIC6. Interacts with ARRB2. Interacts with HTR2A. Interacts with DRD1. Interacts with KCNA2. In terms of processing, palmitoylated. Palmitoylation which is required for proper localization to the plasma membrane and stability of the receptor could be carried on by ZDHHC4, ZDHHC3 and ZDHHC8.

The protein resides in the cell membrane. Its subcellular location is the golgi apparatus membrane. Functionally, dopamine receptor whose activity is mediated by G proteins which inhibit adenylyl cyclase. Positively regulates postnatal regression of retinal hyaloid vessels via suppression of VEGFR2/KDR activity, downstream of OPN5. The chain is D(2) dopamine receptor (DRD2) from Chlorocebus aethiops (Green monkey).